The following is a 126-amino-acid chain: Large ribosomal subunit protein uL22 (126 aa).

It belongs to the universal ribosomal protein uL22 family. In terms of assembly, part of the 50S ribosomal subunit.

In terms of biological role, this protein binds specifically to 23S rRNA; its binding is stimulated by other ribosomal proteins, e.g. L4, L17, and L20. It is important during the early stages of 50S assembly. It makes multiple contacts with different domains of the 23S rRNA in the assembled 50S subunit and ribosome. The globular domain of the protein is located near the polypeptide exit tunnel on the outside of the subunit, while an extended beta-hairpin is found that lines the wall of the exit tunnel in the center of the 70S ribosome. This Bradyrhizobium sp. (strain BTAi1 / ATCC BAA-1182) protein is Large ribosomal subunit protein uL22.